A 337-amino-acid polypeptide reads, in one-letter code: tRNA pseudouridine synthase D (337 aa).

Asp-77 functions as the Nucleophile in the catalytic mechanism. The 157-residue stretch at 152-308 folds into the TRUD domain; that stretch reads GFPNYFTEQR…ARDFHWEFVE (157 aa).

This sequence belongs to the pseudouridine synthase TruD family.

It catalyses the reaction uridine(13) in tRNA = pseudouridine(13) in tRNA. Its function is as follows. Responsible for synthesis of pseudouridine from uracil-13 in transfer RNAs. The chain is tRNA pseudouridine synthase D from Mannheimia succiniciproducens (strain KCTC 0769BP / MBEL55E).